Reading from the N-terminus, the 296-residue chain is Sulfotransferase 1B1 (296 aa).

48-53 lines the 3'-phosphoadenylyl sulfate pocket; sequence KSGTTW. 107–109 provides a ligand contact to substrate; sequence KTH. His-109 functions as the Proton acceptor in the catalytic mechanism. 3'-phosphoadenylyl sulfate is bound by residues Arg-131, Ser-139, Tyr-194, 228–233, and 258–260; these read TSFEMM and RKG.

Belongs to the sulfotransferase 1 family. As to expression, expressed highly in the colon, kidney and small intestine of male and female dogs. Highly expressed in the jejunum and ileum of the male dog than the female dog, which displayed more expression in duodenum (at protein level).

Its subcellular location is the cytoplasm. It catalyses the reaction a phenol + 3'-phosphoadenylyl sulfate = an aryl sulfate + adenosine 3',5'-bisphosphate + H(+). It carries out the reaction 3,3',5-triiodo-L-thyronine + 3'-phosphoadenylyl sulfate = 3,3',5-triiodo-L-thyronine sulfate + adenosine 3',5'-bisphosphate + H(+). The catalysed reaction is 3,3',5'-triiodo-L-thyronine + 3'-phosphoadenylyl sulfate = 3,3',5'-triiodo-L-thyronine sulfate + adenosine 3',5'-bisphosphate + H(+). The enzyme catalyses 3,3'-diiodo-L-thyronine + 3'-phosphoadenylyl sulfate = 3,3'-diiodo-L-thyronine sulfate + adenosine 3',5'-bisphosphate + H(+). It catalyses the reaction 4-ethylphenol + 3'-phosphoadenylyl sulfate = 4-ethylphenyl sulfate + adenosine 3',5'-bisphosphate + H(+). In terms of biological role, sulfotransferase that utilizes 3'-phospho-5'-adenylyl sulfate (PAPS) as sulfonate donor to catalyze the sulfate conjugation of dopamine, small phenols such as 1-naphthol and p-nitrophenol and thyroid hormones, including 3,3'-diiodothyronine, triidothyronine (T3) and reverse triiodothyronine (rT3). May play a role in gut microbiota-host metabolic interaction. O-sulfonates 4-ethylphenol (4-EP), a dietary tyrosine-derived metabolite produced by gut bacteria. The product 4-EPS crosses the blood-brain barrier and may negatively regulate oligodendrocyte maturation and myelination, affecting the functional connectivity of different brain regions associated with the limbic system. This Canis lupus familiaris (Dog) protein is Sulfotransferase 1B1 (SULT1B1).